The primary structure comprises 443 residues: Chromosome partition protein MukF (443 aa).

Positions 209–237 (LDETSGNLRELQDTLNAAGDKLQAQLLRI) are leucine-zipper.

Belongs to the MukF family. In terms of assembly, interacts, and probably forms a ternary complex, with MukE and MukB via its C-terminal region. The complex formation is stimulated by calcium or magnesium. It is required for an interaction between MukE and MukB.

It localises to the cytoplasm. Its subcellular location is the nucleoid. Its function is as follows. Involved in chromosome condensation, segregation and cell cycle progression. May participate in facilitating chromosome segregation by condensation DNA from both sides of a centrally located replisome during cell division. Not required for mini-F plasmid partitioning. Probably acts via its interaction with MukB and MukE. Overexpression results in anucleate cells. It has a calcium binding activity. In Actinobacillus pleuropneumoniae serotype 7 (strain AP76), this protein is Chromosome partition protein MukF.